The primary structure comprises 66 residues: Rho-elapitoxin-Da1b (66 aa).

Cystine bridges form between Cys3/Cys24, Cys17/Cys42, Cys46/Cys58, and Cys59/Cys64.

It belongs to the three-finger toxin family. Short-chain subfamily. Aminergic toxin sub-subfamily. In terms of tissue distribution, expressed by the venom gland.

The protein resides in the secreted. Functionally, non-competitive antagonist of alpha-2 adrenergic receptors (ADRA2) in smooth muscles, and partial antagonist of D3 dopamine receptors (DRD3) (inhibits 25% of methylspiperone binding to this receptor). Also shows a low antagonism on D2 dopamine receptors (DRD2) (short isoform). Shows high affinity to adrenergic receptors (Ki=14 nM (ADRA2A), Ki=73 nM (ADRA2B), and Ki=38 nM (ADRA2C)). Increases heart rate and blood catecholamine concentrations. The chain is Rho-elapitoxin-Da1b from Dendroaspis angusticeps (Eastern green mamba).